The following is a 246-amino-acid chain: Sugar fermentation stimulation protein homolog (246 aa).

This sequence belongs to the SfsA family.

This Prochlorococcus marinus (strain MIT 9312) protein is Sugar fermentation stimulation protein homolog.